The chain runs to 213 residues: Holliday junction branch migration complex subunit RuvA (213 aa).

Residues 1 to 64 (MIARLVGFLV…EDSITLFGFA (64 aa)) form a domain I region. Residues 65 to 143 (SYLERDWFRL…AIALFSSAKG (79 aa)) are domain II. Residues 144–159 (DHLAVEDISQPAASAH) are flexible linker. Residues 160–213 (HAGNFMADAVSALLNLGFKPAEAQRVVQLASEELGDQATLDSLVRLALRLSSKH) form a domain III region.

This sequence belongs to the RuvA family. In terms of assembly, homotetramer. Forms an RuvA(8)-RuvB(12)-Holliday junction (HJ) complex. HJ DNA is sandwiched between 2 RuvA tetramers; dsDNA enters through RuvA and exits via RuvB. An RuvB hexamer assembles on each DNA strand where it exits the tetramer. Each RuvB hexamer is contacted by two RuvA subunits (via domain III) on 2 adjacent RuvB subunits; this complex drives branch migration. In the full resolvosome a probable DNA-RuvA(4)-RuvB(12)-RuvC(2) complex forms which resolves the HJ.

The protein resides in the cytoplasm. The RuvA-RuvB-RuvC complex processes Holliday junction (HJ) DNA during genetic recombination and DNA repair, while the RuvA-RuvB complex plays an important role in the rescue of blocked DNA replication forks via replication fork reversal (RFR). RuvA specifically binds to HJ cruciform DNA, conferring on it an open structure. The RuvB hexamer acts as an ATP-dependent pump, pulling dsDNA into and through the RuvAB complex. HJ branch migration allows RuvC to scan DNA until it finds its consensus sequence, where it cleaves and resolves the cruciform DNA. In Zymomonas mobilis subsp. mobilis (strain ATCC 31821 / ZM4 / CP4), this protein is Holliday junction branch migration complex subunit RuvA.